The following is a 390-amino-acid chain: MSGLCFNPFRLRWSLRSKLPLEPSLPNLPCNPSSSKTNRYAEAETMEKKRFDSMESWSMILESENVETWEASKGEREEWTADLSQLFIGNKFASGAHSRIYRGIYKQRAVAVKMVRIPTHKEETRAKLEQQFKSEVALLSRLFHPNIVQFIAACKKPPVYCIITEYMSQGNLRMYLNKKEPYSLSIETVLRLALDISRGMEYLHSQGVIHRDLKSNNLLLNDEMRVKVADFGTSCLETQCREAKGNMGTYRWMAPEMIKEKPYTRKVDVYSFGIVLWELTTALLPFQGMTPVQAAFAVAEKNERPPLPASCQPALAHLIKRCWSENPSKRPDFSNIVAVLEKYDECVKEGLPLTSHASLTKTKKAILDHLKGCVTSISSPFSSSSVPVNA.

In terms of domain architecture, Protein kinase spans 86 to 359 (LFIGNKFASG…GLPLTSHASL (274 aa)). ATP is bound by residues 92 to 100 (FASGAHSRI) and Lys113. Asp212 serves as the catalytic Proton acceptor.

Belongs to the protein kinase superfamily. Ser/Thr protein kinase family. Interacts with DTX56. Binds to MPK4 and MPK12. Associates to CBC1 and CBC2. Post-translationally, autophosphorylated. In terms of tissue distribution, mainly localizes in guard cells. Expressed at low level in leaves, stems, roots and flowers.

The protein resides in the cell membrane. It catalyses the reaction L-seryl-[protein] + ATP = O-phospho-L-seryl-[protein] + ADP + H(+). The enzyme catalyses L-threonyl-[protein] + ATP = O-phospho-L-threonyl-[protein] + ADP + H(+). The catalysed reaction is L-tyrosyl-[protein] + ATP = O-phospho-L-tyrosyl-[protein] + ADP + H(+). Its activity is regulated as follows. Inhibited by MPK4 and MPK12. In terms of biological role, serine/threonine/tyrosine kinase involved in the control of stomatal movement in response to CO(2). Functions as a major negative regulator of CO(2)-induced stomatal closing. Does not seem to be involved in stomatal closure in response to abscisic acid (ABA) or light. Involved in the control of red light-induced stomatal opening. Is epistatic to SRK2E/OST1 function during stomatal responses to red light and altered CO(2). Phosphorylates SRK2E/OST1 and GHR1 to prevents SRK2E/OST1- and GHR1-induced activation of SLAC1, thus preventing stomatal closure. Mediates the phosphorylation of CBC1 and CBC2. In Arabidopsis thaliana (Mouse-ear cress), this protein is Serine/threonine/tyrosine-protein kinase HT1.